Reading from the N-terminus, the 757-residue chain is Polyribonucleotide nucleotidyltransferase (757 aa).

Positions 525 and 531 each coordinate Mg(2+). Residues P591 to V650 enclose the KH domain. The S1 motif domain maps to G662–V734. The tract at residues E737–G757 is disordered.

The protein belongs to the polyribonucleotide nucleotidyltransferase family. Mg(2+) is required as a cofactor.

The protein localises to the cytoplasm. It carries out the reaction RNA(n+1) + phosphate = RNA(n) + a ribonucleoside 5'-diphosphate. Its function is as follows. Involved in mRNA degradation. Catalyzes the phosphorolysis of single-stranded polyribonucleotides processively in the 3'- to 5'-direction. This chain is Polyribonucleotide nucleotidyltransferase, found in Clavibacter michiganensis subsp. michiganensis (strain NCPPB 382).